Reading from the N-terminus, the 69-residue chain is U5-agatoxin-Ao1a (69 aa).

Positions 1-20 (MRTIISLLLLSAMVFAVIEA) are cleaved as a signal peptide. Positions 21–34 (ISLEEGLQLFEGER) are excised as a propeptide. 2 disulfide bridges follow: C36–C52 and C43–C57.

This sequence belongs to the neurotoxin 01 (U2-agtx) family. In terms of processing, does not contain a cysteine at position 61 which disrupts the cysteine framework. In terms of tissue distribution, expressed by the venom gland.

Its subcellular location is the secreted. The chain is U5-agatoxin-Ao1a from Agelena orientalis (Funnel-web spider).